A 214-amino-acid chain; its full sequence is Adenylate kinase (214 aa).

10-15 (GAGKGT) lines the ATP pocket. Residues 30 to 59 (STGDMLRAAVKAGTPLGLEAKKVMDAGQLV) are NMP. AMP-binding positions include Thr-31, Arg-36, 57–59 (QLV), 85–88 (GFPR), and Gln-92. Residues 122 to 159 (GRRVHPGSGRVYHVVFNPPKVEGKDDVTGEDLAIRPDD) form an LID region. Residues Arg-123 and 132–133 (VY) each bind ATP. AMP is bound by residues Arg-156 and Arg-167. Gln-200 contributes to the ATP binding site.

It belongs to the adenylate kinase family. In terms of assembly, monomer.

The protein localises to the cytoplasm. It catalyses the reaction AMP + ATP = 2 ADP. It participates in purine metabolism; AMP biosynthesis via salvage pathway; AMP from ADP: step 1/1. Its function is as follows. Catalyzes the reversible transfer of the terminal phosphate group between ATP and AMP. Plays an important role in cellular energy homeostasis and in adenine nucleotide metabolism. The chain is Adenylate kinase from Shewanella baltica (strain OS155 / ATCC BAA-1091).